The following is a 270-amino-acid chain: Formamidopyrimidine-DNA glycosylase (270 aa).

The active-site Schiff-base intermediate with DNA is proline 2. Glutamate 3 functions as the Proton donor in the catalytic mechanism. The Proton donor; for beta-elimination activity role is filled by lysine 58. 3 residues coordinate DNA: histidine 91, arginine 110, and arginine 151. The FPG-type zinc-finger motif lies at 236–270; sequence FVYGRGGQPCKVCGTELREVKLGQRASVYCPRCQR. Arginine 260 acts as the Proton donor; for delta-elimination activity in catalysis.

Belongs to the FPG family. Monomer. The cofactor is Zn(2+).

The catalysed reaction is Hydrolysis of DNA containing ring-opened 7-methylguanine residues, releasing 2,6-diamino-4-hydroxy-5-(N-methyl)formamidopyrimidine.. The enzyme catalyses 2'-deoxyribonucleotide-(2'-deoxyribose 5'-phosphate)-2'-deoxyribonucleotide-DNA = a 3'-end 2'-deoxyribonucleotide-(2,3-dehydro-2,3-deoxyribose 5'-phosphate)-DNA + a 5'-end 5'-phospho-2'-deoxyribonucleoside-DNA + H(+). In terms of biological role, involved in base excision repair of DNA damaged by oxidation or by mutagenic agents. Acts as a DNA glycosylase that recognizes and removes damaged bases. Has a preference for oxidized purines, such as 7,8-dihydro-8-oxoguanine (8-oxoG). Has AP (apurinic/apyrimidinic) lyase activity and introduces nicks in the DNA strand. Cleaves the DNA backbone by beta-delta elimination to generate a single-strand break at the site of the removed base with both 3'- and 5'-phosphates. In Pseudomonas putida (strain ATCC 700007 / DSM 6899 / JCM 31910 / BCRC 17059 / LMG 24140 / F1), this protein is Formamidopyrimidine-DNA glycosylase.